A 1188-amino-acid polypeptide reads, in one-letter code: Zinc finger SWIM domain-containing protein 5 (1188 aa).

A compositionally biased stretch (basic and acidic residues) spans 1–10 (MAEGGEREEL). Disordered stretches follow at residues 1-46 (MAEG…GAGG) and 123-171 (AGAA…TGTA). 2 stretches are compositionally biased toward low complexity: residues 126 to 136 (AAGAAGASPVE) and 146 to 155 (AAPAGSAPGA). A compositionally biased stretch (gly residues) spans 156–171 (AGAGSSPGLGAGTGTA). The SWIM-type zinc-finger motif lies at 222–259 (YKVAISFDRCKITSVSCGCGNKDIFYCAHVVALSLYRI).

This Mus musculus (Mouse) protein is Zinc finger SWIM domain-containing protein 5 (Zswim5).